Consider the following 1189-residue polypeptide: Magnesium-chelatase subunit H (1189 aa).

It belongs to the Mg-chelatase subunit H family.

The enzyme catalyses protoporphyrin IX + Mg(2+) + ATP + H2O = Mg-protoporphyrin IX + ADP + phosphate + 3 H(+). Its pathway is porphyrin-containing compound metabolism; bacteriochlorophyll biosynthesis (light-independent). In terms of biological role, involved in bacteriochlorophyll pigment biosynthesis; introduces a magnesium ion into protoporphyrin IX to yield Mg-protoroporphyrin IX. The chain is Magnesium-chelatase subunit H (bchH) from Rhodobacter capsulatus (strain ATCC BAA-309 / NBRC 16581 / SB1003).